Consider the following 274-residue polypeptide: 2,3,4,5-tetrahydropyridine-2,6-dicarboxylate N-succinyltransferase (274 aa).

The substrate site is built by arginine 104 and aspartate 141.

This sequence belongs to the transferase hexapeptide repeat family. As to quaternary structure, homotrimer.

The protein resides in the cytoplasm. It catalyses the reaction (S)-2,3,4,5-tetrahydrodipicolinate + succinyl-CoA + H2O = (S)-2-succinylamino-6-oxoheptanedioate + CoA. The protein operates within amino-acid biosynthesis; L-lysine biosynthesis via DAP pathway; LL-2,6-diaminopimelate from (S)-tetrahydrodipicolinate (succinylase route): step 1/3. The polypeptide is 2,3,4,5-tetrahydropyridine-2,6-dicarboxylate N-succinyltransferase (Escherichia coli O6:H1 (strain CFT073 / ATCC 700928 / UPEC)).